Here is a 127-residue protein sequence, read N- to C-terminus: Holo-[acyl-carrier-protein] synthase (127 aa).

Residues aspartate 8 and glutamate 60 each coordinate Mg(2+).

This sequence belongs to the P-Pant transferase superfamily. AcpS family. The cofactor is Mg(2+).

It localises to the cytoplasm. The catalysed reaction is apo-[ACP] + CoA = holo-[ACP] + adenosine 3',5'-bisphosphate + H(+). Its function is as follows. Transfers the 4'-phosphopantetheine moiety from coenzyme A to a Ser of acyl-carrier-protein. The sequence is that of Holo-[acyl-carrier-protein] synthase from Marinomonas sp. (strain MWYL1).